The primary structure comprises 622 residues: Pyranose 2-oxidase (622 aa).

Positions 1–28 are cleaved as a signal peptide; sequence MSTSSSDPFYNFAKTSFKSAAAQKASAT. The propeptide occupies 29–38; the sequence is SLPPLPGPDQ. The residue at position 167 (H167) is a Tele-8alpha-FAD histidine. Substrate contacts are provided by Q448 and H450. The Proton acceptor role is filled by H548. N593 is a catalytic residue.

Belongs to the GMC oxidoreductase family. Homotetramer. It depends on FAD as a cofactor.

It localises to the periplasm. The enzyme catalyses D-glucose + O2 = 2-dehydro-D-glucose + H2O2. Its function is as follows. Catalyzes the oxidation of various aldopyranoses and disaccharides on carbon-2 to the corresponding 2-keto sugars concomitant with the reduction of O(2) to H(2)O(2). Plays an important role in lignin degradation of wood rot fungi by supplying the essential cosubstrate H(2)O(2) for the ligninolytic peroxidases, lignin peroxidase and manganese-dependent peroxidase. In Trametes pubescens (White-rot fungus), this protein is Pyranose 2-oxidase (p2ox).